The chain runs to 658 residues: Integrator complex subunit 9 (658 aa).

The tract at residues 550-574 is disordered; it reads KHVLQLPPKPPQPPTSKKRKRVSDD. The Nuclear localization signal motif lies at 566–570; it reads KKRKR.

It belongs to the metallo-beta-lactamase superfamily. RNA-metabolizing metallo-beta-lactamase-like family. INTS9 subfamily. In terms of assembly, component of the Integrator complex, composed of core subunits INTS1, INTS2, INTS3, INTS4, INTS5, INTS6, INTS7, INTS8, INTS9/RC74, INTS10, INTS11/CPSF3L, INTS12, INTS13, INTS14 and INTS15. The core complex associates with protein phosphatase 2A subunits PPP2CA and PPP2R1A, to form the Integrator-PP2A (INTAC) complex. INTS9 is part of the RNA endonuclease subcomplex, composed of INTS4, INTS9, INTS11 and inositol hexakisphosphate (InsP6).

The protein localises to the nucleus. The protein resides in the cytoplasm. In terms of biological role, component of the integrator complex, a multiprotein complex that terminates RNA polymerase II (Pol II) transcription in the promoter-proximal region of genes. The integrator complex provides a quality checkpoint during transcription elongation by driving premature transcription termination of transcripts that are unfavorably configured for transcriptional elongation: the complex terminates transcription by (1) catalyzing dephosphorylation of the C-terminal domain (CTD) of Pol II subunit POLR2A/RPB1 and SUPT5H/SPT5, (2) degrading the exiting nascent RNA transcript via endonuclease activity and (3) promoting the release of Pol II from bound DNA. The integrator complex is also involved in terminating the synthesis of non-coding Pol II transcripts, such as enhancer RNAs (eRNAs), small nuclear RNAs (snRNAs), telomerase RNAs and long non-coding RNAs (lncRNAs). The polypeptide is Integrator complex subunit 9 (INTS9) (Gallus gallus (Chicken)).